Here is a 685-residue protein sequence, read N- to C-terminus: E3 ubiquitin-protein ligase RNF6 (685 aa).

Basic and acidic residues-rich tracts occupy residues 1–10, 17–29, and 88–107; these read MNQSRSRSDG, PQDH…ERRW, and DLRD…SSHE. Disordered stretches follow at residues 1-29, 81-107, 121-142, 168-273, 286-345, and 499-576; these read MNQS…ERRW, EQLA…SSHE, GNAT…RTNP, DYTD…REGQ, RSNV…RRRG, and EADS…NPNN. Composition is skewed to polar residues over residues 199-213, 250-264, and 286-297; these read SQTS…SNIP, ASRT…QSGG, and RSNVTVRNTNQR. Positions 303–313 are enriched in low complexity; the sequence is LRSTSNSRSRS. Polar residues-rich tracts occupy residues 314 to 325 and 519 to 528; these read PIQRQSGTVYHN and ELSNLGTDNN. The segment at 632–673 adopts an RING-type zinc-finger fold; sequence CSVCISDYVTGNKLRQLPCMHEFHIHCIDRWLSENCTCPICR.

Belongs to the RNF12 family. As to expression, weakly expressed in peripheral blood, spleen, prostate, testis and ovary. According to a report, it is preferentially expressed in testis and ovary and hardly detected in other tissues.

It localises to the nucleus. The protein resides in the cytoplasm. The protein localises to the cell projection. Its subcellular location is the axon. It is found in the PML body. It catalyses the reaction S-ubiquitinyl-[E2 ubiquitin-conjugating enzyme]-L-cysteine + [acceptor protein]-L-lysine = [E2 ubiquitin-conjugating enzyme]-L-cysteine + N(6)-ubiquitinyl-[acceptor protein]-L-lysine.. Its pathway is protein modification; protein ubiquitination. In terms of biological role, E3 ubiquitin-protein ligase mediating 'Lys-48'-linked polyubiquitination of LIMK1 and its subsequent targeting to the proteasome for degradation. Negatively regulates axonal outgrowth through regulation of the LIMK1 turnover. Mediates 'Lys-6' and 'Lys-27'-linked polyubiquitination of AR/androgen receptor thereby modulating its transcriptional activity. May also bind DNA and function as a transcriptional regulator. Mediates polyubiquitination of QKI in macrophages, leading to its degradation. This is E3 ubiquitin-protein ligase RNF6 from Homo sapiens (Human).